Here is a 454-residue protein sequence, read N- to C-terminus: uncharacterized protein (454 aa).

This sequence belongs to the outer membrane factor (OMF) (TC 1.B.17) family.

This is an uncharacterized protein from Haemophilus influenzae (strain ATCC 51907 / DSM 11121 / KW20 / Rd).